The chain runs to 154 residues: Ribosome maturation factor RimP (154 aa).

Belongs to the RimP family.

It localises to the cytoplasm. Its function is as follows. Required for maturation of 30S ribosomal subunits. This Natranaerobius thermophilus (strain ATCC BAA-1301 / DSM 18059 / JW/NM-WN-LF) protein is Ribosome maturation factor RimP.